We begin with the raw amino-acid sequence, 416 residues long: Ribulose bisphosphate carboxylase large chain (416 aa).

Positions 102 and 152 each coordinate substrate. The Proton acceptor role is filled by Lys-154. A substrate-binding site is contributed by Lys-156. Lys-180, Asp-182, and Glu-183 together coordinate Mg(2+). Lys-180 is modified (N6-carboxylysine). His-273 serves as the catalytic Proton acceptor. Residues Arg-274, His-306, and Ser-358 each coordinate substrate.

It belongs to the RuBisCO large chain family. Type I subfamily. Heterohexadecamer of 8 large chains and 8 small chains; disulfide-linked. The disulfide link is formed within the large subunit homodimers. Requires Mg(2+) as cofactor. In terms of processing, the disulfide bond which can form in the large chain dimeric partners within the hexadecamer appears to be associated with oxidative stress and protein turnover.

It localises to the plastid. The protein resides in the chloroplast. The enzyme catalyses 2 (2R)-3-phosphoglycerate + 2 H(+) = D-ribulose 1,5-bisphosphate + CO2 + H2O. The catalysed reaction is D-ribulose 1,5-bisphosphate + O2 = 2-phosphoglycolate + (2R)-3-phosphoglycerate + 2 H(+). RuBisCO catalyzes two reactions: the carboxylation of D-ribulose 1,5-bisphosphate, the primary event in carbon dioxide fixation, as well as the oxidative fragmentation of the pentose substrate in the photorespiration process. Both reactions occur simultaneously and in competition at the same active site. The protein is Ribulose bisphosphate carboxylase large chain (rbcL) of Arthropteris beckleri (Fern).